The primary structure comprises 871 residues: Translation initiation factor IF-2 (871 aa).

2 disordered regions span residues 60 to 101 and 184 to 203; these read KKNI…QEVK and ESLKKKKKEKKSFVASKKES. Positions 61–72 are enriched in basic residues; sequence KNIKTPTAKKPK. Positions 73-101 are enriched in basic and acidic residues; that stretch reads KENIKEQEKLNESEKKEPKKEEKLKQEVK. The region spanning 370-537 is the tr-type G domain; sequence TRAPVITIMG…IVLLQADILE (168 aa). Residues 379–386 form a G1 region; sequence GHVDHGKT. 379–386 is a GTP binding site; the sequence is GHVDHGKT. The interval 404–408 is G2; the sequence is GITQH. A G3 region spans residues 425–428; that stretch reads DTPG. Residues 425–429 and 479–482 each bind GTP; these read DTPGH and NKMD. The interval 479-482 is G4; the sequence is NKMD. The segment at 515 to 517 is G5; sequence SAK.

This sequence belongs to the TRAFAC class translation factor GTPase superfamily. Classic translation factor GTPase family. IF-2 subfamily.

It is found in the cytoplasm. In terms of biological role, one of the essential components for the initiation of protein synthesis. Protects formylmethionyl-tRNA from spontaneous hydrolysis and promotes its binding to the 30S ribosomal subunits. Also involved in the hydrolysis of GTP during the formation of the 70S ribosomal complex. This Campylobacter jejuni subsp. jejuni serotype O:6 (strain 81116 / NCTC 11828) protein is Translation initiation factor IF-2.